The primary structure comprises 196 residues: Pro-FMRFamide-related neuropeptide VF (196 aa).

The first 21 residues, 1–21 (MEIISLKRFILLMLATSSLLT), serve as a signal peptide directing secretion. Residues 22–57 (SNIFCTDESRIPSLYSKKNYDKYSEPRGDLGWEKER) constitute a propeptide that is removed on maturation. Phe92 bears the Phenylalanine amide mark. 2 propeptides span residues 95–99 (NMEEE) and 115–121 (NREDSLS). Phe131 carries the phenylalanine amide modification. Positions 134-196 (TIAAKSITKT…IDDAELKQEK (63 aa)) are excised as a propeptide.

Belongs to the FARP (FMRFamide related peptide) family. In terms of tissue distribution, expressed in hypothalamus, where it is localized to the dorsomedial hypothalamic nucleus (DMH), paraventricular nucleus (PVN), and to neuronal projections from the PVN to the neurosecretory zone of the median eminence.

It is found in the secreted. May act in concert with kisspeptin, through opposing affects, to regulate the activity of gonadotropin-releasing hormone (GnRH) neurons across the seasons, leading to an annual change in fertility and the cyclical seasonal transition from non-breeding to breeding season. Functionally, efficiently inhibits forskolin-induced production of cAMP. Acts as a potent negative regulator of gonadotropin synthesis and secretion. Induces secretion of prolactin. In terms of biological role, efficiently inhibits forskolin-induced production of cAMP. Blocks morphine-induced analgesia. Its function is as follows. Shows no inhibitory activity of forskolin-induced production of cAMP. This Ovis aries (Sheep) protein is Pro-FMRFamide-related neuropeptide VF.